A 916-amino-acid polypeptide reads, in one-letter code: Protein translocase subunit SecA (916 aa).

ATP contacts are provided by residues Gln87, 105 to 109 (GEGKT), and Asp512. The disordered stretch occupies residues 857–916 (QHAEAPSMEQAVAGEDEELPEGPAPVVPLEPVRNEQKIGRNEPCPCGSGKKYKHCHGQLD). Zn(2+) contacts are provided by Cys900, Cys902, Cys911, and His912. Positions 906–916 (KKYKHCHGQLD) are enriched in basic residues.

Belongs to the SecA family. Monomer and homodimer. Part of the essential Sec protein translocation apparatus which comprises SecA, SecYEG and auxiliary proteins SecDF-YajC and YidC. Zn(2+) serves as cofactor.

The protein resides in the cell inner membrane. It localises to the cytoplasm. It carries out the reaction ATP + H2O + cellular proteinSide 1 = ADP + phosphate + cellular proteinSide 2.. In terms of biological role, part of the Sec protein translocase complex. Interacts with the SecYEG preprotein conducting channel. Has a central role in coupling the hydrolysis of ATP to the transfer of proteins into and across the cell membrane, serving both as a receptor for the preprotein-SecB complex and as an ATP-driven molecular motor driving the stepwise translocation of polypeptide chains across the membrane. In Pseudomonas paraeruginosa (strain DSM 24068 / PA7) (Pseudomonas aeruginosa (strain PA7)), this protein is Protein translocase subunit SecA.